The sequence spans 230 residues: 7-cyano-7-deazaguanine synthase (230 aa).

Residue 8 to 18 (LSGGMDSAVVT) participates in ATP binding. Zn(2+) contacts are provided by Cys186, Cys196, Cys199, and Cys202.

The protein belongs to the QueC family. It depends on Zn(2+) as a cofactor.

It carries out the reaction 7-carboxy-7-deazaguanine + NH4(+) + ATP = 7-cyano-7-deazaguanine + ADP + phosphate + H2O + H(+). The protein operates within purine metabolism; 7-cyano-7-deazaguanine biosynthesis. Catalyzes the ATP-dependent conversion of 7-carboxy-7-deazaguanine (CDG) to 7-cyano-7-deazaguanine (preQ(0)). This Xylella fastidiosa (strain M23) protein is 7-cyano-7-deazaguanine synthase.